A 359-amino-acid polypeptide reads, in one-letter code: Quinolinate synthase (359 aa).

His81 and Ser99 together coordinate iminosuccinate. Cys144 provides a ligand contact to [4Fe-4S] cluster. Iminosuccinate is bound by residues 170-172 and Ser187; that span reads YVN. A [4Fe-4S] cluster-binding site is contributed by Cys229. Residues 255–257 and Thr272 contribute to the iminosuccinate site; that span reads HPE. Cys315 lines the [4Fe-4S] cluster pocket.

This sequence belongs to the quinolinate synthase family. Type 2 subfamily. [4Fe-4S] cluster serves as cofactor.

The protein resides in the cytoplasm. The enzyme catalyses iminosuccinate + dihydroxyacetone phosphate = quinolinate + phosphate + 2 H2O + H(+). It participates in cofactor biosynthesis; NAD(+) biosynthesis; quinolinate from iminoaspartate: step 1/1. Functionally, catalyzes the condensation of iminoaspartate with dihydroxyacetone phosphate to form quinolinate. The sequence is that of Quinolinate synthase from Sinorhizobium fredii (strain NBRC 101917 / NGR234).